A 218-amino-acid polypeptide reads, in one-letter code: MDKSGSPNASRTSRRRRPRRGSRSASGADAGLRALTQQMLKLNKTLAIGRPTLNHPTFVGSESCKPGYTFTSITLKPPEIEKGSYFGRRLSLPDSVTDYDKKLVSRIQIRINPLPKFDSTVWVTVRKVPSSSDLSVAAISAMFGDGNSPVLVYQYAASGVQANNKLLYDLSEMRADIGDMRKYAVLVYSKDDNLEKDEIVLHVDVEHQRIPISRMLPT.

The residue at position 1 (Met1) is an N-acetylmethionine; by host. Residues 1–30 (MDKSGSPNASRTSRRRRPRRGSRSASGADA) form a disordered region. The span at 12–22 (TSRRRRPRRGS) shows a compositional bias: basic residues.

The protein belongs to the cucumovirus capsid protein family.

Its subcellular location is the virion. Its function is as follows. Capsid protein. Probably binds RNA and plays a role in packaging. The protein is Capsid protein of Cucumis sativus (Cucumber).